The primary structure comprises 3681 residues: E3 ubiquitin-protein ligase UPL1 (3681 aa).

The span at 882–891 (DEKKSVDRGS) shows a compositional bias: basic and acidic residues. A disordered region spans residues 882-912 (DEKKSVDRGSDNSVSASSSTAERESDEDSSN). Over residues 892–901 (DNSVSASSST) the composition is skewed to low complexity. The 42-residue stretch at 1269–1310 (QLDESIVGMIVEMGFSRSRAEIALRRVGTNSVEMAMDWLFTN) folds into the UBA domain. The region spanning 1316 to 1335 (QEDDELAQALALSLGNSSET) is the UIM domain. Disordered stretches follow at residues 1332 to 1358 (SSETPKLEDTEKPVDVPQEEAEPKEPP), 1768 to 1802 (MEVDEPTTKVKGKSKVGEPEKASSSRVGEPEKAEI), 2015 to 2094 (EQLK…MRIE), 2125 to 2151 (ENRADDDVDDDMGDEGEDDEGDDEDAD), 2253 to 2287 (RQTGRSSLDRSGSEVHGFQHPLFSRPSQTGNTASV), 2401 to 2435 (NTTEIQEQLHPDVPPSVGSETVLGDGNEGGQQSEE), 2483 to 2505 (PLPLNSTPNEIDRMEVGEGDGAP), 2537 to 2606 (IAPP…APEV), 2975 to 3003 (SPSSGVPEKLENKPVGEEASSETRKDAES), and 3228 to 3254 (TAGEVKESSAHGSSSKTSVDSQKKTDG). Basic and acidic residues-rich tracts occupy residues 1336–1345 (PKLEDTEKPV), 1782–1802 (KVGEPEKASSSRVGEPEKAEI), and 2017–2037 (LKSEVPNEKKNRDSDERHDSH). Residues 2038–2087 (GNSTETEADELNQNNSSLQQVTDAAGNGQEQAQVSSQSAGERGSSQTQAM) show a composition bias toward polar residues. Acidic residues predominate over residues 2130 to 2151 (DDVDDDMGDEGEDDEGDDEDAD). Over residues 2253 to 2265 (RQTGRSSLDRSGS) the composition is skewed to basic and acidic residues. The span at 2277-2287 (RPSQTGNTASV) shows a compositional bias: polar residues. The residue at position 2598 (Ser2598) is a Phosphoserine. Residues 2982 to 3002 (EKLENKPVGEEASSETRKDAE) show a composition bias toward basic and acidic residues. The span at 3237–3247 (AHGSSSKTSVD) shows a compositional bias: polar residues. An HECT domain is found at 3340–3681 (SPQDLKGRLN…HEASEGFGFA (342 aa)). Cys3648 acts as the Glycyl thioester intermediate in catalysis.

It belongs to the UPL family. TOM1/PTR1 subfamily. In terms of tissue distribution, widely expressed. Expressed in root, stem, cauline and rosette leaf, seedling and flower (at protein level).

It catalyses the reaction S-ubiquitinyl-[E2 ubiquitin-conjugating enzyme]-L-cysteine + [acceptor protein]-L-lysine = [E2 ubiquitin-conjugating enzyme]-L-cysteine + N(6)-ubiquitinyl-[acceptor protein]-L-lysine.. It functions in the pathway protein modification; protein ubiquitination. Its function is as follows. Probable E3 ubiquitin-protein ligase which mediates ubiquitination and subsequent proteasomal degradation of target proteins. The protein is E3 ubiquitin-protein ligase UPL1 (UPL1) of Arabidopsis thaliana (Mouse-ear cress).